The sequence spans 549 residues: Tegument protein (549 aa).

Disordered regions lie at residues 50–92 (KKKA…TASP), 353–391 (ETGD…CSSY), and 523–542 (TPIK…TRSP). Polar residues-rich tracts occupy residues 75 to 84 (PQALSVPSLS) and 356 to 369 (DCSS…QTHR). A compositionally biased stretch (low complexity) spans 523 to 534 (TPIKTTSSSSPR).

In terms of biological role, this viral structural protein may have important functions, such as protein kinase activity, DNA binding, and possible transcriptional activation of immediate-early genes. This Homo sapiens (Human) protein is Tegument protein.